A 1051-amino-acid chain; its full sequence is Carbamoyl phosphate synthase large chain (1051 aa).

Residues 1-399 (MKETPKKVLV…SLQKAVRMLD (399 aa)) are carboxyphosphate synthetic domain. Positions 127, 167, 173, 174, 206, 208, 213, 239, 240, 241, 282, and 296 each coordinate ATP. Residues 131 to 325 (RETMIENNLP…LAYVSAKLAL (195 aa)) form the ATP-grasp 1 domain. Gln-282, Glu-296, and Asn-298 together coordinate Mg(2+). 3 residues coordinate Mn(2+): Gln-282, Glu-296, and Asn-298. An oligomerization domain region spans residues 400 to 548 (IGEPGVVGGK…LTYNGTEDDL (149 aa)). The carbamoyl phosphate synthetic domain stretch occupies residues 549-930 (EFSQGNKLLI…LKSWLSSIPN (382 aa)). In terms of domain architecture, ATP-grasp 2 spans 673-863 (SKLLDKLGIS…LINESMKAIF (191 aa)). Positions 709, 748, 750, 755, 779, 780, 781, 782, 822, and 834 each coordinate ATP. Residues Gln-822, Glu-834, and Asn-836 each contribute to the Mg(2+) site. The Mn(2+) site is built by Gln-822, Glu-834, and Asn-836. One can recognise an MGS-like domain in the interval 930-1051 (NRIPNKNGIA…FEISEYGGGI (122 aa)). Positions 931 to 1051 (RIPNKNGIAL…FEISEYGGGI (121 aa)) are allosteric domain.

The protein belongs to the CarB family. Composed of two chains; the small (or glutamine) chain promotes the hydrolysis of glutamine to ammonia, which is used by the large (or ammonia) chain to synthesize carbamoyl phosphate. Tetramer of heterodimers (alpha,beta)4. Mg(2+) serves as cofactor. Mn(2+) is required as a cofactor.

The catalysed reaction is hydrogencarbonate + L-glutamine + 2 ATP + H2O = carbamoyl phosphate + L-glutamate + 2 ADP + phosphate + 2 H(+). The enzyme catalyses hydrogencarbonate + NH4(+) + 2 ATP = carbamoyl phosphate + 2 ADP + phosphate + 2 H(+). Its pathway is amino-acid biosynthesis; L-arginine biosynthesis; carbamoyl phosphate from bicarbonate: step 1/1. It functions in the pathway pyrimidine metabolism; UMP biosynthesis via de novo pathway; (S)-dihydroorotate from bicarbonate: step 1/3. Large subunit of the glutamine-dependent carbamoyl phosphate synthetase (CPSase). CPSase catalyzes the formation of carbamoyl phosphate from the ammonia moiety of glutamine, carbonate, and phosphate donated by ATP, constituting the first step of 2 biosynthetic pathways, one leading to arginine and/or urea and the other to pyrimidine nucleotides. The large subunit (synthetase) binds the substrates ammonia (free or transferred from glutamine from the small subunit), hydrogencarbonate and ATP and carries out an ATP-coupled ligase reaction, activating hydrogencarbonate by forming carboxy phosphate which reacts with ammonia to form carbamoyl phosphate. The chain is Carbamoyl phosphate synthase large chain from Saccharolobus islandicus (strain M.16.27) (Sulfolobus islandicus).